Here is a 549-residue protein sequence, read N- to C-terminus: Probable protein kinase UbiB (549 aa).

The 379-residue stretch at 123–501 (DFDDTPLASA…QQKAHKSNYL (379 aa)) folds into the Protein kinase domain. ATP contacts are provided by residues 129 to 137 (LASASISQV) and K152. The Proton acceptor role is filled by D287. 2 helical membrane-spanning segments follow: residues 498–518 (SNYL…LLNQ) and 520–540 (ATLW…VLGW).

This sequence belongs to the ABC1 family. UbiB subfamily.

It localises to the cell inner membrane. It participates in cofactor biosynthesis; ubiquinone biosynthesis [regulation]. In terms of biological role, is probably a protein kinase regulator of UbiI activity which is involved in aerobic coenzyme Q (ubiquinone) biosynthesis. The chain is Probable protein kinase UbiB from Shewanella pealeana (strain ATCC 700345 / ANG-SQ1).